Reading from the N-terminus, the 60-residue chain is Cytotoxin 2 (60 aa).

4 disulfides stabilise this stretch: cysteine 3–cysteine 21, cysteine 14–cysteine 38, cysteine 42–cysteine 53, and cysteine 54–cysteine 59.

It belongs to the three-finger toxin family. Short-chain subfamily. Type IA cytotoxin sub-subfamily. As to quaternary structure, monomer in solution; Homodimer and oligomer in the presence of negatively charged lipids forming a pore with a size ranging between 20 and 30 Angstroms. In terms of tissue distribution, expressed by the venom gland.

It is found in the secreted. The protein localises to the target cell membrane. Functionally, shows cytolytic activity on many different cells by forming pore in lipid membranes. In vivo, increases heart rate or kills the animal by cardiac arrest. In addition, it binds to heparin with high affinity, interacts with Kv channel-interacting protein 1 (KCNIP1) in a calcium-independent manner, and binds to integrin alpha-V/beta-3 (ITGAV/ITGB3) with moderate affinity. The chain is Cytotoxin 2 from Naja mossambica (Mozambique spitting cobra).